A 186-amino-acid polypeptide reads, in one-letter code: Negative modulator of initiation of replication (186 aa).

The protein belongs to the SeqA family. Homodimer. Polymerizes to form helical filaments.

It localises to the cytoplasm. Functionally, negative regulator of replication initiation, which contributes to regulation of DNA replication and ensures that replication initiation occurs exactly once per chromosome per cell cycle. Binds to pairs of hemimethylated GATC sequences in the oriC region, thus preventing assembly of replication proteins and re-initiation at newly replicated origins. Repression is relieved when the region becomes fully methylated. The protein is Negative modulator of initiation of replication of Glaesserella parasuis serovar 5 (strain SH0165) (Haemophilus parasuis).